A 2326-amino-acid polypeptide reads, in one-letter code: Nonribosomal peptide synthetase inpB (2326 aa).

The region spanning 8–84 (SPSEWLQLEL…SLYSMAQGPA (77 aa)) is the Carrier 1 domain. An O-(pantetheine 4'-phosphoryl)serine modification is found at S45. A disordered region spans residues 87-121 (ASSSTSDNASDKDSSLDDSETGALTPTTDAGSSLA). Residues 108-121 (GALTPTTDAGSSLA) are compositionally biased toward polar residues. A condensation 1 region spans residues 144 to 568 (QAVVPCSAIQ…LLSPGEVSQL (425 aa)). Positions 593–997 (LQPGAAAVNS…GRRDTQVKIR (405 aa)) are adenylation 1. The Carrier 2 domain occupies 1145-1221 (EPSTETEFKL…DLARAVESRV (77 aa)). S1182 carries the O-(pantetheine 4'-phosphoryl)serine modification. A disordered region spans residues 1226 to 1247 (DEEDPAPFSVWRESRGSEPSEE). The interval 1266 to 1680 (EDVLPCTALQ…LLSPEDVNQL (415 aa)) is condensation 2. The adenylation 2 stretch occupies residues 1702 to 2097 (EVARSRPGAA…GRIDTQIKIR (396 aa)). The Carrier 3 domain occupies 2216 to 2294 (PPSTEMEKAL…DLAVLLEKRP (79 aa)). S2253 is modified (O-(pantetheine 4'-phosphoryl)serine).

The protein belongs to the NRP synthetase family.

It functions in the pathway secondary metabolite biosynthesis. Its function is as follows. Nonribosomal peptide synthetase; part of the inp gene cluster that mediates the biosynthesis of fellutamide B, a mycotoxin that acts as a proteasome inhibitor. In the first step of fellutabmide B biosynthesis inpC activates 3-hydroxydodecanoic acid to generate 3-hydroxydodecanoyl-AMP that is then loaded onto the T0 domain of inpB. The 3-hydroxydodecanoyl-S-phosphopantetheinyl-T0 is sequentially extended with L-Asn and L-Gln by the two CAT modules of inpB. The linear lipodipeptide from inpB is then transferred onto inpA for the addition of the third amino acid, L-Leu. Reductive releasing of the lipotripeptide by the TE domain of inpA produces (2S)-fellutamide B. InpF might be involved in the release and transfer of the lipodipeptide from inpB to inpA. The inp cluster-encoded proteasome subunit inpE confers resistance to internally produced fellutamides. The MFS efflux transporter inpD may contribute to fellutamide resistance as well. The chain is Nonribosomal peptide synthetase inpB from Emericella nidulans (strain FGSC A4 / ATCC 38163 / CBS 112.46 / NRRL 194 / M139) (Aspergillus nidulans).